Consider the following 646-residue polypeptide: Sulfate transporter 3.2 (646 aa).

Topologically, residues 1–76 are cytoplasmic; sequence MSSKRASQYH…GYSLEYLKSD (76 aa). Residues 77–97 form a helical membrane-spanning segment; the sequence is VISGITIASLAIPQGISYAQL. Over 98–99 the chain is Extracellular; sequence AN. Residues 100–120 form a helical membrane-spanning segment; the sequence is LPPILGLYSSLVPPLVYAIMG. Residues 121-124 lie on the Cytoplasmic side of the membrane; it reads SSRD. The helical transmembrane segment at 125 to 145 threads the bilayer; the sequence is LAVGTVAVASLLTAAMLGKEV. Topologically, residues 146-154 are extracellular; the sequence is NAVVNPKLY. The helical transmembrane segment at 155–175 threads the bilayer; that stretch reads LHLAFTATFFAGLMQTCLGLL. Residue R176 is a topological domain, cytoplasmic. Residues 177–197 form a helical membrane-spanning segment; that stretch reads LGFVVEILSHAAIVGFMGGAA. Topologically, residues 198-235 are extracellular; sequence TVVCLQQLKGLLGLHHFTHSTDIVTVLRSIFSQSHMWR. The chain crosses the membrane as a helical span at residues 236-256; the sequence is WESGVLGCCFLIFLLTTKYIS. Residues 257 to 262 are Cytoplasmic-facing; it reads KKRPKL. The chain crosses the membrane as a helical span at residues 263–283; the sequence is FWISAMSPLVSVIFGTIFLYF. Over 284 to 315 the chain is Extracellular; sequence LHDQFHGIQFIGELKKGINPPSITHLVFTPPY. Residues 316–336 form a helical membrane-spanning segment; that stretch reads VMLALKVGIITGVIALAEGIA. The Cytoplasmic segment spans residues 337–354; that stretch reads VGRSFAMYKNYNIDGNKE. Residues 355 to 375 traverse the membrane as a helical segment; sequence MIAFGMMNILGSFSSCYLTTG. At 376–390 the chain is on the extracellular side; that stretch reads PFSRSAVNYNAGCKT. 2 consecutive transmembrane segments (helical) span residues 391–411 and 412–432; these read ALSN…LTPL and FFYT…LGLV. The Extracellular portion of the chain corresponds to 433 to 447; sequence DYEAAIHLWKLDKFD. The chain crosses the membrane as a helical span at residues 448–468; it reads FFVCLSAYLGVVFGTIEIGLI. Topologically, residues 469 to 646 are cytoplasmic; it reads LSVGISVMRL…DSPVPEFNNV (178 aa). Residues 504-627 form the STAS domain; that stretch reads HYPQAITRSS…LTVAEAVAAC (124 aa).

This sequence belongs to the SLC26A/SulP transporter (TC 2.A.53) family. As to expression, expressed only in leaves.

Its subcellular location is the membrane. H(+)/sulfate cotransporter that may play a role in the regulation of sulfate assimilation. This chain is Sulfate transporter 3.2 (SULTR3;2), found in Arabidopsis thaliana (Mouse-ear cress).